Consider the following 615-residue polypeptide: Crinkler effector protein 15 (615 aa).

A signal peptide spans 1–17 (MVKLVCAIVGVAGSAFP). The interval 18–54 (VDIDASQLVGDLKKAIKAENAMTFTGDAKDLQLFLAK) is LQLFLAK domain. The interval 55–136 (QPVDDESGKE…NMELPSSEQI (82 aa)) is DWL domain. The HVLVXXP motif signature appears at 137–143 (HVLVVVP). N531 carries N-linked (GlcNAc...) asparagine glycosylation.

This sequence belongs to the Crinkler effector family.

It localises to the secreted. The protein localises to the host nucleus. Secreted effector that elicits necrosis in host plants, a characteristic of plant innate immunity. This chain is Crinkler effector protein 15, found in Phytophthora infestans (Potato late blight agent).